Here is a 183-residue protein sequence, read N- to C-terminus: Ankyrin repeat domain-containing protein 39 (183 aa).

4 ANK repeats span residues 30 to 59, 63 to 92, 96 to 125, and 129 to 158; these read DFER…DPSQ, AGYT…KCDA, GGAT…NPRL, and DGMT…ALKA. S153 is modified (phosphoserine).

Belongs to the ANKRD39 family.

The protein is Ankyrin repeat domain-containing protein 39 (ANKRD39) of Bos taurus (Bovine).